The primary structure comprises 260 residues: 3'-5' ssDNA/RNA exonuclease TatD (260 aa).

A divalent metal cation contacts are provided by Glu92, His128, and His153.

Belongs to the metallo-dependent hydrolases superfamily. TatD-type hydrolase family. TatD subfamily. Monomer. Mg(2+) is required as a cofactor.

It localises to the cytoplasm. 3'-5' exonuclease that prefers single-stranded DNA and RNA. May play a role in the H(2)O(2)-induced DNA damage repair. The sequence is that of 3'-5' ssDNA/RNA exonuclease TatD from Pectobacterium parmentieri (strain WPP163) (Pectobacterium wasabiae (strain WPP163)).